The sequence spans 310 residues: HTH-type transcriptional activator TtdR (310 aa).

Residues 6–63 (PLAKDLQVLVEIVHSGSFSAAAATLGQTPAFVTKRIQILENTLATTLLNRSARGVALT) form the HTH lysR-type domain. Positions 23–42 (FSAAAATLGQTPAFVTKRIQ) form a DNA-binding region, H-T-H motif.

Belongs to the LysR transcriptional regulatory family.

In terms of biological role, positive regulator required for L-tartrate-dependent anaerobic growth on glycerol. Induces expression of the ttdA-ttdB-ygjE operon. The sequence is that of HTH-type transcriptional activator TtdR (ttdR) from Escherichia coli O6:K15:H31 (strain 536 / UPEC).